The sequence spans 227 residues: Urease accessory protein UreF 2 (227 aa).

The protein belongs to the UreF family. UreD, UreF and UreG form a complex that acts as a GTP-hydrolysis-dependent molecular chaperone, activating the urease apoprotein by helping to assemble the nickel containing metallocenter of UreC. The UreE protein probably delivers the nickel.

The protein resides in the cytoplasm. In terms of biological role, required for maturation of urease via the functional incorporation of the urease nickel metallocenter. The sequence is that of Urease accessory protein UreF 2 from Brucella anthropi (strain ATCC 49188 / DSM 6882 / CCUG 24695 / JCM 21032 / LMG 3331 / NBRC 15819 / NCTC 12168 / Alc 37) (Ochrobactrum anthropi).